The chain runs to 454 residues: Cobyrinate a,c-diamide synthase (454 aa).

The GATase cobBQ-type domain maps to K247–N442. The active-site Nucleophile is C329.

Belongs to the CobB/CbiA family. Requires Mg(2+) as cofactor.

It catalyses the reaction cob(II)yrinate + 2 L-glutamine + 2 ATP + 2 H2O = cob(II)yrinate a,c diamide + 2 L-glutamate + 2 ADP + 2 phosphate + 2 H(+). It functions in the pathway cofactor biosynthesis; adenosylcobalamin biosynthesis; cob(II)yrinate a,c-diamide from sirohydrochlorin (anaerobic route): step 10/10. In terms of biological role, catalyzes the ATP-dependent amidation of the two carboxylate groups at positions a and c of cobyrinate, using either L-glutamine or ammonia as the nitrogen source. This Leptospira interrogans serogroup Icterohaemorrhagiae serovar Lai (strain 56601) protein is Cobyrinate a,c-diamide synthase.